The primary structure comprises 238 residues: Ribosomal RNA small subunit methyltransferase G (238 aa).

Residues G77, F82, 128-129 (AE), and R147 contribute to the S-adenosyl-L-methionine site.

The protein belongs to the methyltransferase superfamily. RNA methyltransferase RsmG family.

The protein localises to the cytoplasm. Specifically methylates the N7 position of guanine in position 535 of 16S rRNA. This is Ribosomal RNA small subunit methyltransferase G from Exiguobacterium sp. (strain ATCC BAA-1283 / AT1b).